The chain runs to 966 residues: Aminopeptidase N (966 aa).

Topologically, residues 1 to 8 are cytoplasmic; it reads MAKGFYIS. The helical; Signal-anchor for type II membrane protein transmembrane segment at 9-32 threads the bilayer; sequence KTLGILGILLGVAAVCTIIALSVV. The interval 33 to 68 is cytosolic Ser/Thr-rich junction; the sequence is YAQEKNRNAENSATAPTLPGSTSATTATTTPAVDES. Over 33-966 the chain is Extracellular; that stretch reads YAQEKNRNAE…VFKWFTENSS (934 aa). A disordered region spans residues 42–64; it reads ENSATAPTLPGSTSATTATTTPA. Over residues 44 to 64 the composition is skewed to low complexity; the sequence is SATAPTLPGSTSATTATTTPA. The metalloprotease stretch occupies residues 69–966; sequence KPWNQYRLPK…VFKWFTENSS (898 aa). N-linked (GlcNAc...) asparagine glycosylation is found at Asn106, Asn114, and Asn128. A Sulfotyrosine modification is found at Tyr176. 4 N-linked (GlcNAc...) asparagine glycosylation sites follow: Asn234, Asn288, Asn318, and Asn332. Residue 351 to 355 coordinates substrate; sequence GAMEN. Residue His387 coordinates Zn(2+). The active-site Proton acceptor is the Glu388. His391 and Glu410 together coordinate Zn(2+). Tyr418 and Tyr423 each carry sulfotyrosine. Residues Asn573, Asn606, Asn624, and Asn734 are each glycosylated (N-linked (GlcNAc...) asparagine). An intrachain disulfide couples Cys760 to Cys767. N-linked (GlcNAc...) asparagine glycans are attached at residues Asn784 and Asn817. Cys797 and Cys833 are oxidised to a cystine. Tyr852 carries the post-translational modification Phosphotyrosine.

It belongs to the peptidase M1 family. Homodimer. Interacts with SLC6A19. Zn(2+) is required as a cofactor. N- and O-glycosylated. In terms of processing, sulfated. Post-translationally, may undergo proteolysis and give rise to a soluble form. As to expression, expressed in the intestinal brush border (at protein level). Highly expressed in intestinal tract and kidney, present in liver, lymph node, spleen, and brain. Found as well in monocytes, macrophages, dendritic cells, veiled cells and B-cells but not on T-cells and thymocytes.

The protein localises to the cell membrane. It catalyses the reaction Release of an N-terminal amino acid, Xaa-|-Yaa- from a peptide, amide or arylamide. Xaa is preferably Ala, but may be most amino acids including Pro (slow action). When a terminal hydrophobic residue is followed by a prolyl residue, the two may be released as an intact Xaa-Pro dipeptide.. Functionally, broad specificity aminopeptidase which plays a role in the final digestion of peptides generated from hydrolysis of proteins by gastric and pancreatic proteases. Also involved in the processing of various peptides including peptide hormones, such as angiotensin III and IV, neuropeptides, and chemokines. May also be involved the cleavage of peptides bound to major histocompatibility complex class II molecules of antigen presenting cells. May have a role in angiogenesis and promote cholesterol crystallization. May have a role in amino acid transport by acting as binding partner of amino acid transporter SLC6A19 and regulating its activity. This Mus musculus (Mouse) protein is Aminopeptidase N (Anpep).